Consider the following 619-residue polypeptide: 4-hydroxyphenylalkanoate adenylyltransferase (619 aa).

The protein belongs to the ATP-dependent AMP-binding enzyme family.

The catalysed reaction is 17-(4-hydroxyphenyl)heptadecanoate + holo-[(phenol)carboxyphthiodiolenone synthase] + ATP = 17-(4-hydroxyphenyl)heptadecanoyl-[(phenol)carboxyphthiodiolenone synthase] + AMP + diphosphate. It carries out the reaction 19-(4-hydroxyphenyl)nonadecanoate + holo-[(phenol)carboxyphthiodiolenone synthase] + ATP = 19-(4-hydroxyphenyl)nonadecanoyl-[(phenol)carboxyphthiodiolenone synthase] + AMP + diphosphate. The protein operates within lipid metabolism; fatty acid biosynthesis. In terms of biological role, catalyzes the activation of long-chain fatty acids as acyl-adenylates (acyl-AMP), which are then transferred to the multifunctional polyketide synthase PpsA for further chain extension. Involved in the biosynthesis of phenolphthiocerol, which is an important intermediate in the biosynthesis of phenolic glycolipid (PGL), also called mycosid B. The chain is 4-hydroxyphenylalkanoate adenylyltransferase (fadD29) from Mycobacterium bovis (strain ATCC BAA-935 / AF2122/97).